The following is a 213-amino-acid chain: GTP cyclohydrolase 1 (213 aa).

The interval 1–27 (MDDVVKSLLQRTTSSLTKPAPARPSRE) is disordered. Residues cysteine 100, histidine 103, and cysteine 172 each coordinate Zn(2+).

This sequence belongs to the GTP cyclohydrolase I family. As to quaternary structure, homomer.

The enzyme catalyses GTP + H2O = 7,8-dihydroneopterin 3'-triphosphate + formate + H(+). It participates in cofactor biosynthesis; 7,8-dihydroneopterin triphosphate biosynthesis; 7,8-dihydroneopterin triphosphate from GTP: step 1/1. The polypeptide is GTP cyclohydrolase 1 (Beijerinckia indica subsp. indica (strain ATCC 9039 / DSM 1715 / NCIMB 8712)).